The chain runs to 683 residues: Long-chain-fatty-acid--CoA ligase 5 (683 aa).

Residues 12-32 traverse the membrane as a helical; Signal-anchor for type III membrane protein segment; sequence LPTPALICILTFGAAIFLWLI. I32 carries the phosphoserine modification. Topologically, residues 33 to 683 are cytoplasmic; it reads TRPQPVLPLL…IDSLYEHIQD (651 aa). K361 carries the post-translational modification N6-acetyllysine.

Belongs to the ATP-dependent AMP-binding enzyme family. Mg(2+) is required as a cofactor.

It localises to the mitochondrion. Its subcellular location is the endoplasmic reticulum. The protein localises to the mitochondrion outer membrane. It is found in the endoplasmic reticulum membrane. The protein resides in the cell membrane. It carries out the reaction a long-chain fatty acid + ATP + CoA = a long-chain fatty acyl-CoA + AMP + diphosphate. The enzyme catalyses (5Z,8Z,11Z,14Z)-eicosatetraenoate + ATP + CoA = (5Z,8Z,11Z,14Z)-eicosatetraenoyl-CoA + AMP + diphosphate. The catalysed reaction is hexadecanoate + ATP + CoA = hexadecanoyl-CoA + AMP + diphosphate. It catalyses the reaction (E)-hexadec-2-enoate + ATP + CoA = (2E)-hexadecenoyl-CoA + AMP + diphosphate. It carries out the reaction 15-hydroxy-(5Z,8Z,11Z,13E)-eicosatetraenoate + ATP + CoA = 15-hydroxy-(5Z,8Z,11Z,13E)-eicosatetraenoyl-CoA + AMP + diphosphate. The enzyme catalyses 12-hydroxy-(5Z,8Z,10E,14Z)-eicosatetraenoate + ATP + CoA = 12-hydroxy-(5Z,8Z,10E,14Z)-eicosatetraenoyl-CoA + AMP + diphosphate. The catalysed reaction is 5-hydroxy-(6E,8Z,11Z,14Z)-eicosatetraenoate + ATP + CoA = 5-hydroxy-(6E,8Z,11Z,14Z)-eicosatetraenoyl-CoA + AMP + diphosphate. It catalyses the reaction 14,15-epoxy-(5Z,8Z,11Z)-eicosatrienoate + ATP + CoA = 14,15-epoxy-(5Z,8Z,11Z)-eicosatrienoyl-CoA + AMP + diphosphate. It carries out the reaction 11,12-epoxy-(5Z,8Z,14Z)-eicosatrienoate + ATP + CoA = 11,12-epoxy-(5Z,8Z,14Z)-eicosatrienoyl-CoA + AMP + diphosphate. The enzyme catalyses (9Z)-octadecenoate + ATP + CoA = (9Z)-octadecenoyl-CoA + AMP + diphosphate. Catalyzes the conversion of long-chain fatty acids to their active form acyl-CoAs for both synthesis of cellular lipids, and degradation via beta-oxidation. ACSL5 may activate fatty acids from exogenous sources for the synthesis of triacylglycerol destined for intracellular storage. Utilizes a wide range of saturated fatty acids with a preference for C16-C18 unsaturated fatty acids. It was suggested that it may also stimulate fatty acid oxidation. At the villus tip of the crypt-villus axis of the small intestine may sensitize epithelial cells to apoptosis specifically triggered by the death ligand TRAIL. May have a role in the survival of glioma cells. The protein is Long-chain-fatty-acid--CoA ligase 5 of Homo sapiens (Human).